A 397-amino-acid polypeptide reads, in one-letter code: Acetate kinase (397 aa).

Mg(2+) is bound at residue asparagine 7. Lysine 14 is a binding site for ATP. Position 90 (arginine 90) interacts with substrate. Aspartate 147 serves as the catalytic Proton donor/acceptor. Residues 207-211 (HLGNG), 282-284 (DFR), and 330-334 (GLGEN) contribute to the ATP site. Mg(2+) is bound at residue glutamate 383.

The protein belongs to the acetokinase family. In terms of assembly, homodimer. Mg(2+) serves as cofactor. It depends on Mn(2+) as a cofactor.

It is found in the cytoplasm. It carries out the reaction acetate + ATP = acetyl phosphate + ADP. It participates in metabolic intermediate biosynthesis; acetyl-CoA biosynthesis; acetyl-CoA from acetate: step 1/2. Catalyzes the formation of acetyl phosphate from acetate and ATP. Can also catalyze the reverse reaction. This Clostridium botulinum (strain ATCC 19397 / Type A) protein is Acetate kinase.